A 941-amino-acid polypeptide reads, in one-letter code: DNA mismatch repair protein MutS (941 aa).

613–620 is an ATP binding site; it reads GPNMAGKS.

The protein belongs to the DNA mismatch repair MutS family.

Its function is as follows. This protein is involved in the repair of mismatches in DNA. It is possible that it carries out the mismatch recognition step. This protein has a weak ATPase activity. The chain is DNA mismatch repair protein MutS from Clostridium botulinum (strain Alaska E43 / Type E3).